A 191-amino-acid chain; its full sequence is Cytochrome c oxidase assembly protein CtaG (191 aa).

At 1–9 (MALNGPQKT) the chain is on the cytoplasmic side. The helical; Signal-anchor for type II membrane protein transmembrane segment at 10-30 (VVQLVSVVVVMGGLAWASVPF) threads the bilayer. Over 31-191 (YDWFCRVTGF…LDAGEKTNTN (161 aa)) the chain is Periplasmic.

This sequence belongs to the COX11/CtaG family.

The protein resides in the cell inner membrane. Its function is as follows. Exerts its effect at some terminal stage of cytochrome c oxidase synthesis, probably by being involved in the insertion of the copper B into subunit I. The sequence is that of Cytochrome c oxidase assembly protein CtaG from Ruegeria pomeroyi (strain ATCC 700808 / DSM 15171 / DSS-3) (Silicibacter pomeroyi).